Reading from the N-terminus, the 387-residue chain is Cysteine desulfurase IscS (387 aa).

Pyridoxal 5'-phosphate contacts are provided by residues 73–74 (AT), asparagine 155, glutamine 183, and 203–205 (SAH). The residue at position 206 (lysine 206) is an N6-(pyridoxal phosphate)lysine. A pyridoxal 5'-phosphate-binding site is contributed by threonine 241. The active-site Cysteine persulfide intermediate is cysteine 328. Cysteine 328 serves as a coordination point for [2Fe-2S] cluster.

It belongs to the class-V pyridoxal-phosphate-dependent aminotransferase family. NifS/IscS subfamily. Homodimer. Forms a heterotetramer with IscU, interacts with other sulfur acceptors. Requires pyridoxal 5'-phosphate as cofactor.

It is found in the cytoplasm. It carries out the reaction (sulfur carrier)-H + L-cysteine = (sulfur carrier)-SH + L-alanine. The protein operates within cofactor biosynthesis; iron-sulfur cluster biosynthesis. Its function is as follows. Master enzyme that delivers sulfur to a number of partners involved in Fe-S cluster assembly, tRNA modification or cofactor biosynthesis. Catalyzes the removal of elemental sulfur atoms from cysteine to produce alanine. Functions as a sulfur delivery protein for Fe-S cluster synthesis onto IscU, an Fe-S scaffold assembly protein, as well as other S acceptor proteins. This is Cysteine desulfurase IscS from Helicobacter pylori (strain J99 / ATCC 700824) (Campylobacter pylori J99).